Consider the following 164-residue polypeptide: MEARTTDLSDLYPEGEALPMVFKSFGGRARFAGRVRTLRVFEDNALVRKVLEEEGAGQVLFVDGGGSLRTALLGGNLARLAWERGWAGVVVHGAVRDTEELRGVPIGLLALAATPKKSAKEGKGEVDVPLKVLGVEVLPGSFLLADEDGLLLLPEPPSGVRSGG.

Residues 74-77 and Arg-96 contribute to the substrate site; that span reads GGNL. Residue Asp-97 coordinates a divalent metal cation.

This sequence belongs to the class II aldolase/RraA-like family. As to quaternary structure, homotrimer. A divalent metal cation serves as cofactor.

The catalysed reaction is 4-hydroxy-4-methyl-2-oxoglutarate = 2 pyruvate. It catalyses the reaction oxaloacetate + H(+) = pyruvate + CO2. Catalyzes the aldol cleavage of 4-hydroxy-4-methyl-2-oxoglutarate (HMG) into 2 molecules of pyruvate. Also contains a secondary oxaloacetate (OAA) decarboxylase activity due to the common pyruvate enolate transition state formed following C-C bond cleavage in the retro-aldol and decarboxylation reactions. The protein is Putative 4-hydroxy-4-methyl-2-oxoglutarate aldolase of Thermus thermophilus (strain ATCC BAA-163 / DSM 7039 / HB27).